The primary structure comprises 485 residues: Glutamate--tRNA ligase (485 aa).

The 'HIGH' region motif lies at 12–22; sequence PSPTGEPHVGT. Residues 253–257 carry the 'KMSKS' region motif; sequence KLSKR. Lys256 provides a ligand contact to ATP.

Belongs to the class-I aminoacyl-tRNA synthetase family. Glutamate--tRNA ligase type 1 subfamily. As to quaternary structure, monomer.

The protein localises to the cytoplasm. It catalyses the reaction tRNA(Glu) + L-glutamate + ATP = L-glutamyl-tRNA(Glu) + AMP + diphosphate. In terms of biological role, catalyzes the attachment of glutamate to tRNA(Glu) in a two-step reaction: glutamate is first activated by ATP to form Glu-AMP and then transferred to the acceptor end of tRNA(Glu). The protein is Glutamate--tRNA ligase of Rhizobium meliloti (strain 1021) (Ensifer meliloti).